A 577-amino-acid polypeptide reads, in one-letter code: Cleavage stimulation factor subunit 2 (577 aa).

At Ser-14 the chain carries Phosphoserine. One can recognise an RRM domain in the interval 16–94 (RSVFVGNIPY…RALRVDNAAS (79 aa)). The interval 108–248 (APVIESPYGE…VNGAPPLMQA (141 aa)) is interactions with CSTF3 and SYMPK. Lys-189 is covalently cross-linked (Glycyl lysine isopeptide (Lys-Gly) (interchain with G-Cter in SUMO2)). Positions 207-230 (PVHGAGPGSGSNVSMNQQNPQAPQ) are disordered. Position 308 is an omega-N-methylarginine (Arg-308). The segment at 319–409 (RGLLGDAPND…DGRGGRDPRG (91 aa)) is disordered. The segment covering 360-373 (PGHESRGPPPHELR) has biased composition (basic and acidic residues). One copy of the 1; approximate repeat lies at 410–414 (IDARG). The 12 X 5 AA tandem repeats of M-E-A-R-[AG] stretch occupies residues 410-469 (IDARGMEARAMEARGLDARGLEARAMEARAMEARAMEARAMEARAMEVRGMEARGMDTRG). 2 tandem repeats follow at residues 415–419 (MEARA) and 420–424 (MEARG). The 4; approximate repeat unit spans residues 425-429 (LDARG). Residues 430–434 (LEARA) form a 5; approximate repeat. 4 consecutive repeat copies span residues 435-439 (MEARA), 440-444 (MEARA), 445-449 (MEARA), and 450-454 (MEARA). The stretch at 455 to 459 (MEVRG) is one 10; approximate repeat. Residues 460–464 (MEARG) form repeat 11. The 12; approximate repeat unit spans residues 465–469 (MDTRG). Omega-N-methylarginine is present on residues Arg-468 and Arg-475. A disordered region spans residues 509–532 (LQGASIQGGSQPGGFSPGQNQVTP). Positions 514–577 (IQGGSQPGGF…EQIQKSTGAP (64 aa)) are interaction with RPO2TC1. Phosphoserine is present on residues Ser-518 and Ser-524.

In terms of assembly, the CSTF complex is composed of CSTF1 (50 kDa subunit), CSTF2 (64 kDa subunit) and CSTF3 (77 kDa subunit). CSTF2 directly interacts with CSTF3, SYMPK and RPO2TC1. Interacts with HSF1 in heat-stressed cells. Interacts with CPSF2, CPSF3 and FIP1L1. Interacts with DDX1.

The protein localises to the nucleus. One of the multiple factors required for polyadenylation and 3'-end cleavage of mammalian pre-mRNAs. This subunit is directly involved in the binding to pre-mRNAs. In Pongo abelii (Sumatran orangutan), this protein is Cleavage stimulation factor subunit 2 (CSTF2).